Reading from the N-terminus, the 443-residue chain is Chromosomal replication initiator protein DnaA (443 aa).

Residues 1 to 76 (MMDAWPRCLE…GNGEVALAVG (76 aa)) are domain I, interacts with DnaA modulators. Positions 76-105 (GSRPRAPEPAPAPVAATIAPQAAPIAPFAG) are domain II. A domain III, AAA+ region region spans residues 106–323 (NLDSHYTFAN…GALNTLVARA (218 aa)). Positions 151, 153, 154, and 155 each coordinate ATP. Positions 324–443 (NFTGRSITVE…WEKLIRKLSE (120 aa)) are domain IV, binds dsDNA.

Belongs to the DnaA family. As to quaternary structure, oligomerizes as a right-handed, spiral filament on DNA at oriC.

The protein localises to the cytoplasm. In terms of biological role, plays an essential role in the initiation and regulation of chromosomal replication. ATP-DnaA binds to the origin of replication (oriC) to initiate formation of the DNA replication initiation complex once per cell cycle. Binds the DnaA box (a 9 base pair repeat at the origin) and separates the double-stranded (ds)DNA. Forms a right-handed helical filament on oriC DNA; dsDNA binds to the exterior of the filament while single-stranded (ss)DNA is stabiized in the filament's interior. The ATP-DnaA-oriC complex binds and stabilizes one strand of the AT-rich DNA unwinding element (DUE), permitting loading of DNA polymerase. After initiation quickly degrades to an ADP-DnaA complex that is not apt for DNA replication. Binds acidic phospholipids. This chain is Chromosomal replication initiator protein DnaA, found in Xanthomonas oryzae pv. oryzae (strain KACC10331 / KXO85).